Here is a 176-residue protein sequence, read N- to C-terminus: F(420)H(2) dehydrogenase subunit J (176 aa).

5 helical membrane passes run 13–33 (TAVF…VVIA), 39–59 (AGLA…LLNA), 64–84 (VIQV…AVML), 99–119 (PLAF…AFGT), and 140–160 (IGML…IVLL).

This sequence belongs to the complex I subunit 6 family. In terms of assembly, the FPO complex is composed of at least 13 different subunits. FpoA, FpoH, FpoJ, FpoK, FpoL, FpoM and FpoN proteins constitute the membrane sector of the complex.

Its subcellular location is the cell membrane. It carries out the reaction methanophenazine + reduced coenzyme F420-(gamma-L-Glu)(n) = dihydromethanophenazine + oxidized coenzyme F420-(gamma-L-Glu)(n) + H(+). Its function is as follows. Component of the F(420)H(2) dehydrogenase (FPO complex) which is part of the energy-conserving F(420)H(2):heterodisulfide oxidoreductase system. The membrane-bound electron transfer system of the complex plays an important role in the metabolism of methylotrophic methanogens when the organisms grow on methanol or methylamines. Catalyzes the oxidation of methanophenazine to dihydromethanophenazine. It shuttles electrons from F(420)H(2), via FAD and iron-sulfur (Fe-S) centers, to methanophenazine (an electron carrier in the membrane). It couples the redox reaction to proton translocation (for every two electrons transferred, two hydrogen ions are translocated across the cytoplasmic membrane), and thus conserves the redox energy in a proton gradient. It also catalyzes the oxidation of F(420)H(2) with quinones such as 2,3-dimethyl-1,4-naphthoquinone, 2-methyl-1,4-naphthoquinone and tetramethyl-p-benzoquinone. In Methanosarcina mazei (strain ATCC BAA-159 / DSM 3647 / Goe1 / Go1 / JCM 11833 / OCM 88) (Methanosarcina frisia), this protein is F(420)H(2) dehydrogenase subunit J (fpoJ).